The chain runs to 150 residues: Snaclec CTL-Eoc125 (150 aa).

The N-terminal stretch at 1–23 is a signal peptide; that stretch reads MGRFISVSFGLLVVFLSLSGIGA. Intrachain disulfides connect C27-C38, C55-C144, and C121-C136. Residues 34–145 enclose the C-type lectin domain; the sequence is YEGHCYKVFS…CSSTQQFICK (112 aa).

Belongs to the snaclec family. In terms of assembly, heterodimer; disulfide-linked. Expressed by the venom gland.

The protein resides in the secreted. Functionally, interferes with one step of hemostasis (modulation of platelet aggregation, or coagulation cascade, for example). This chain is Snaclec CTL-Eoc125, found in Echis ocellatus (Ocellated saw-scaled viper).